Here is a 251-residue protein sequence, read N- to C-terminus: Triosephosphate isomerase (251 aa).

Residue 10-12 participates in substrate binding; it reads NWK. The Electrophile role is filled by histidine 95. The active-site Proton acceptor is the glutamate 167. Substrate-binding positions include glycine 173, serine 213, and 234 to 235; that span reads GG.

The protein belongs to the triosephosphate isomerase family. As to quaternary structure, homodimer.

The protein localises to the cytoplasm. The enzyme catalyses D-glyceraldehyde 3-phosphate = dihydroxyacetone phosphate. It functions in the pathway carbohydrate biosynthesis; gluconeogenesis. Its pathway is carbohydrate degradation; glycolysis; D-glyceraldehyde 3-phosphate from glycerone phosphate: step 1/1. Functionally, involved in the gluconeogenesis. Catalyzes stereospecifically the conversion of dihydroxyacetone phosphate (DHAP) to D-glyceraldehyde-3-phosphate (G3P). The sequence is that of Triosephosphate isomerase from Acetivibrio thermocellus (strain ATCC 27405 / DSM 1237 / JCM 9322 / NBRC 103400 / NCIMB 10682 / NRRL B-4536 / VPI 7372) (Clostridium thermocellum).